The sequence spans 391 residues: Succinyl-diaminopimelate desuccinylase (391 aa).

Residue His67 participates in Zn(2+) binding. Asp69 is an active-site residue. Asp101 serves as a coordination point for Zn(2+). Residue Glu135 is the Proton acceptor of the active site. Zn(2+) contacts are provided by Glu136, Glu164, and His353.

The protein belongs to the peptidase M20A family. DapE subfamily. Homodimer. The cofactor is Zn(2+). Co(2+) serves as cofactor.

The enzyme catalyses N-succinyl-(2S,6S)-2,6-diaminopimelate + H2O = (2S,6S)-2,6-diaminopimelate + succinate. Its pathway is amino-acid biosynthesis; L-lysine biosynthesis via DAP pathway; LL-2,6-diaminopimelate from (S)-tetrahydrodipicolinate (succinylase route): step 3/3. Catalyzes the hydrolysis of N-succinyl-L,L-diaminopimelic acid (SDAP), forming succinate and LL-2,6-diaminopimelate (DAP), an intermediate involved in the bacterial biosynthesis of lysine and meso-diaminopimelic acid, an essential component of bacterial cell walls. This Rickettsia bellii (strain OSU 85-389) protein is Succinyl-diaminopimelate desuccinylase.